The sequence spans 95 residues: Small ribosomal subunit protein bS6 (95 aa).

Belongs to the bacterial ribosomal protein bS6 family.

Its function is as follows. Binds together with bS18 to 16S ribosomal RNA. In Corynebacterium kroppenstedtii (strain DSM 44385 / JCM 11950 / CIP 105744 / CCUG 35717), this protein is Small ribosomal subunit protein bS6.